A 416-amino-acid polypeptide reads, in one-letter code: Alpha-1-antiproteinase (416 aa).

Residues 1–24 (MALSITRGLLLLAALCCLAPISLA) form the signal peptide. N-linked (GlcNAc...) asparagine glycans are attached at residues Asn-68, Asn-105, Asn-143, and Asn-269. An RCL region spans residues 371 to 390 (GSTFLEAIPMSLPPDVEFNR). Ser-381 is subject to Phosphoserine.

The protein belongs to the serpin family. As to quaternary structure, interacts with CELA2A. Interacts with ERGIC3 and LMAN1/ERGIC53. Interacts with PRSS1/Trypsin. In terms of tissue distribution, plasma.

The protein resides in the secreted. Its function is as follows. Inhibitor of serine proteases. Its primary target is elastase, but it also has a moderate affinity for plasmin and thrombin. Inhibits trypsin, chymotrypsin and plasminogen activator. In Bos taurus (Bovine), this protein is Alpha-1-antiproteinase (SERPINA1).